Here is a 294-residue protein sequence, read N- to C-terminus: Tyrosine-protein phosphatase (294 aa).

The N-terminal stretch at 1 to 24 (MKTHHANLALALMLGLSSSATAVA) is a signal peptide. The active-site Phosphocysteine intermediate is Cys182. Basic and acidic residues-rich tracts occupy residues 221–231 (QPKDSDERADH) and 238–247 (PGDRPQDGGH). The segment at 221–252 (QPKDSDERADHGAGQAEPGDRPQDGGHGRYRA) is disordered.

This sequence belongs to the protein-tyrosine phosphatase family. In terms of assembly, monomer.

The enzyme catalyses O-phospho-L-tyrosyl-[protein] + H2O = L-tyrosyl-[protein] + phosphate. The polypeptide is Tyrosine-protein phosphatase (iphP) (Nostoc commune).